The primary structure comprises 198 residues: Recombination protein RecR (198 aa).

Residues 57 to 72 form a C4-type zinc finger; the sequence is CPVCFNITDAERCDVC. The Toprim domain occupies 80-173; sequence NLICVVEEPG…VVSRIAYGLP (94 aa).

It belongs to the RecR family.

May play a role in DNA repair. It seems to be involved in an RecBC-independent recombinational process of DNA repair. It may act with RecF and RecO. This Deinococcus deserti (strain DSM 17065 / CIP 109153 / LMG 22923 / VCD115) protein is Recombination protein RecR.